Reading from the N-terminus, the 208-residue chain is Small ribosomal subunit protein uS4 (208 aa).

An S4 RNA-binding domain is found at 98-163; it reads QRLDNVVYRM…NPQITRAIEL (66 aa).

It belongs to the universal ribosomal protein uS4 family. In terms of assembly, part of the 30S ribosomal subunit. Contacts protein S5. The interaction surface between S4 and S5 is involved in control of translational fidelity.

Its function is as follows. One of the primary rRNA binding proteins, it binds directly to 16S rRNA where it nucleates assembly of the body of the 30S subunit. In terms of biological role, with S5 and S12 plays an important role in translational accuracy. This Campylobacter jejuni (strain RM1221) protein is Small ribosomal subunit protein uS4.